The primary structure comprises 2726 residues: Filamin-C (2726 aa).

The segment at 1–260 (MMNNSNYSDA…VMTYLSQFPK (260 aa)) is actin-binding. Residue Ser5 is modified to Phosphoserine. 2 consecutive Calponin-homology (CH) domains span residues 37 to 143 (KIQQ…LHYS) and 160 to 263 (QTPK…KAKL). Filamin repeat units lie at residues 271–369 (SKQL…EVNV), 371–469 (MALG…PVHV), 470–566 (AEAC…EVQV), 567–659 (SPEA…IAHI), 663–759 (PPDC…RVNV), 760–862 (GEGS…HIKV), 863–961 (DPSH…VVNV), 962–1057 (APPL…AVEG), 1058–1150 (VLPP…KATI), 1151–1245 (QPVF…RVHV), 1246–1345 (QPAV…RVGV), 1346–1438 (TEGC…RVPV), 1439–1534 (KDVV…KIKV), 1535–1631 (LPSH…RIHA), and 1636–1735 (DASK…HVLA). An Omega-N-methylarginine modification is found at Arg1003. A phosphoserine mark is found at Ser1162 and Ser1339. The interval 1736–1759 (CDPLPHVEEPAEMLQMRQPYAPLR) is hinge 1. Filamin repeat units follow at residues 1760-1855 (PGTC…QFYV), 1856-1947 (DAIN…TAKI), 1948-2034 (TGDD…KILV), and 2037-2129 (SEIG…TVKV). At Ser2043 the chain carries Phosphoserine. The intradomain insert; mediate targeting to Z lines stretch occupies residues 2163-2244 (GNWFQMVSAQ…FGSITRQQEG (82 aa)). Residues 2193-2210 (EISKTRGGETKREVRVEE) are compositionally biased toward basic and acidic residues. Residues 2193-2214 (EISKTRGGETKREVRVEESTQV) form a disordered region. The Filamin 20; mediates interaction with XIRP1 repeat unit spans residues 2212–2307 (TQVGGDPFPA…VPGSPFQFTV (96 aa)). 2 positions are modified to phosphoserine: Ser2234 and Ser2237. The residue at position 2239 (Thr2239) is a Phosphothreonine. Residues 2241–2260 (QQEGEASSQDMTAQVTSPSG) are compositionally biased toward polar residues. Positions 2241-2261 (QQEGEASSQDMTAQVTSPSGK) are disordered. Filamin repeat units lie at residues 2310 to 2402 (LGEG…VVPV), 2404 to 2497 (SLSD…KIRV), and 2501 to 2593 (SQAG…KAKV). The interval 2404-2725 (SLSDDARRLT…VPGSPFKVNV (322 aa)) is interaction with INPPL1. Phosphoserine occurs at positions 2587, 2618, 2621, 2633, 2715, and 2719. The segment at 2594–2630 (TGPRLSGGHSLHETSTVLVETVTKSSSSRGASYSSIP) is hinge 2. Positions 2594–2726 (TGPRLSGGHS…PGSPFKVNVP (133 aa)) are self-association site, tail. The Filamin 24 repeat unit spans residues 2631–2725 (KFSSDASKVV…VPGSPFKVNV (95 aa)).

The protein belongs to the filamin family. In terms of assembly, homodimer; the filamin repeat 24 and the second hinge domain are important for dimer formation. Interacts with FLNB, INPPL1, ITGB1A, KCND2, MYOT, MYOZ1 and MYOZ3. Interacts with sarcoglycans SGCD and SGCG. Interacts (via filament repeats 17-18, 20-21 and 24) with USP25 (isoform USP25m only). Interacts with FBLIM1. Interacts with XIRP1; this interaction is mediated by filamin 20 repeat. Interacts with KY. Interacts with IGFN1. Interacts with MICALL2. Interacts with ANK3. Interacts with MICALL2. Interacts with ANK3. Interacts with SYNPO2. In terms of processing, ubiquitinated by FBXL22, leading to proteasomal degradation.

The protein resides in the cytoplasm. Its subcellular location is the membrane. It is found in the cytoskeleton. It localises to the myofibril. The protein localises to the sarcomere. The protein resides in the z line. In terms of biological role, muscle-specific filamin, which plays a central role in sarcomere assembly and organization. Critical for normal myogenesis, it probably functions as a large actin-cross-linking protein with structural functions at the Z lines in muscle cells. May be involved in reorganizing the actin cytoskeleton in response to signaling events. The sequence is that of Filamin-C (Flnc) from Mus musculus (Mouse).